A 427-amino-acid chain; its full sequence is 3-phosphoshikimate 1-carboxyvinyltransferase (427 aa).

The 3-phosphoshikimate site is built by K20, S21, and R25. K20 contacts phosphoenolpyruvate. Positions 92 and 120 each coordinate phosphoenolpyruvate. 3-phosphoshikimate is bound by residues S166, Q168, D312, and K339. Q168 is a phosphoenolpyruvate binding site. The active-site Proton acceptor is the D312. Phosphoenolpyruvate is bound by residues R343 and R385.

Belongs to the EPSP synthase family. Monomer.

The protein localises to the cytoplasm. The enzyme catalyses 3-phosphoshikimate + phosphoenolpyruvate = 5-O-(1-carboxyvinyl)-3-phosphoshikimate + phosphate. The protein operates within metabolic intermediate biosynthesis; chorismate biosynthesis; chorismate from D-erythrose 4-phosphate and phosphoenolpyruvate: step 6/7. Catalyzes the transfer of the enolpyruvyl moiety of phosphoenolpyruvate (PEP) to the 5-hydroxyl of shikimate-3-phosphate (S3P) to produce enolpyruvyl shikimate-3-phosphate and inorganic phosphate. The protein is 3-phosphoshikimate 1-carboxyvinyltransferase of Streptococcus agalactiae serotype Ia (strain ATCC 27591 / A909 / CDC SS700).